We begin with the raw amino-acid sequence, 507 residues long: Lysine--tRNA ligase (507 aa).

2 residues coordinate Mg(2+): Glu-406 and Glu-413.

The protein belongs to the class-II aminoacyl-tRNA synthetase family. In terms of assembly, homodimer. It depends on Mg(2+) as a cofactor.

The protein localises to the cytoplasm. It catalyses the reaction tRNA(Lys) + L-lysine + ATP = L-lysyl-tRNA(Lys) + AMP + diphosphate. The polypeptide is Lysine--tRNA ligase (Wolinella succinogenes (strain ATCC 29543 / DSM 1740 / CCUG 13145 / JCM 31913 / LMG 7466 / NCTC 11488 / FDC 602W) (Vibrio succinogenes)).